Consider the following 440-residue polypeptide: Transposon Ty1-PR2 Gag polyprotein (440 aa).

3 stretches are compositionally biased toward polar residues: residues 1-10 (MESQQLSNYP), 48-60 (TKAN…TPAS), and 127-152 (QSQF…GNTF). 3 disordered regions span residues 1–93 (MESQ…MMTQ), 126–173 (PQSQ…RPPP), and 352–440 (GSRN…PETY). The segment covering 153 to 165 (TDSSSADSDMTST) has biased composition (low complexity). Positions 299-401 (NNGIHINNKV…NSKSKTARAH (103 aa)) are RNA-binding. Residues 402-418 (NVSTSNNSPSTDNDSIS) are compositionally biased toward low complexity. Phosphoserine is present on Ser-416. Positions 419-428 (KSTTEPIQLN) are enriched in polar residues. Residues 429–440 (NKHDLHLRPETY) are compositionally biased toward basic and acidic residues.

As to quaternary structure, homotrimer.

The protein resides in the cytoplasm. Functionally, capsid protein (CA) is the structural component of the virus-like particle (VLP), forming the shell that encapsulates the retrotransposons dimeric RNA genome. The particles are assembled from trimer-clustered units and there are holes in the capsid shells that allow for the diffusion of macromolecules. CA also has nucleocapsid-like chaperone activity, promoting primer tRNA(i)-Met annealing to the multipartite primer-binding site (PBS), dimerization of Ty1 RNA and initiation of reverse transcription. The protein is Transposon Ty1-PR2 Gag polyprotein (TY1A-PR2) of Saccharomyces cerevisiae (strain ATCC 204508 / S288c) (Baker's yeast).